Here is a 1391-residue protein sequence, read N- to C-terminus: DNA-directed RNA polymerase subunit beta' (1391 aa).

Cys-72, Cys-74, Cys-87, and Cys-90 together coordinate Zn(2+). Residues Asp-462, Asp-464, and Asp-466 each contribute to the Mg(2+) site. The Zn(2+) site is built by Cys-816, Cys-890, Cys-897, and Cys-900.

This sequence belongs to the RNA polymerase beta' chain family. The RNAP catalytic core consists of 2 alpha, 1 beta, 1 beta' and 1 omega subunit. When a sigma factor is associated with the core the holoenzyme is formed, which can initiate transcription. Mg(2+) is required as a cofactor. The cofactor is Zn(2+).

It carries out the reaction RNA(n) + a ribonucleoside 5'-triphosphate = RNA(n+1) + diphosphate. DNA-dependent RNA polymerase catalyzes the transcription of DNA into RNA using the four ribonucleoside triphosphates as substrates. This chain is DNA-directed RNA polymerase subunit beta', found in Neisseria meningitidis serogroup C / serotype 2a (strain ATCC 700532 / DSM 15464 / FAM18).